We begin with the raw amino-acid sequence, 273 residues long: Cilia- and flagella-associated protein 298-B (273 aa).

Belongs to the CFAP298 family.

The protein resides in the cytoplasm. Its subcellular location is the cytoskeleton. The protein localises to the cilium basal body. Functionally, plays a role in motile cilium function, possibly by acting on outer dynein arm assembly. Seems to be important for initiation rather than maintenance of cilium motility. Required for correct positioning of the cilium at the apical cell surface, suggesting an additional role in the planar cell polarity (PCP) pathway. May suppress canonical Wnt signaling activity. The polypeptide is Cilia- and flagella-associated protein 298-B (cfap298-b) (Xenopus laevis (African clawed frog)).